The following is a 134-amino-acid chain: uncharacterized protein (134 aa).

The tract at residues 59–92 is disordered; sequence VSKPKRRSPHPHGNKAADKRKTTEKEPERKKRVG. A compositionally biased stretch (basic residues) spans 61–71; that stretch reads KPKRRSPHPHG. Residues 73–87 show a composition bias toward basic and acidic residues; the sequence is KAADKRKTTEKEPER.

This is an uncharacterized protein from Saccharomyces cerevisiae (strain ATCC 204508 / S288c) (Baker's yeast).